Reading from the N-terminus, the 564-residue chain is Dihydroxy-acid dehydratase (564 aa).

Residue cysteine 55 coordinates [2Fe-2S] cluster. Aspartate 87 lines the Mg(2+) pocket. A [2Fe-2S] cluster-binding site is contributed by cysteine 128. 2 residues coordinate Mg(2+): aspartate 129 and lysine 130. Lysine 130 carries the N6-carboxylysine modification. A [2Fe-2S] cluster-binding site is contributed by cysteine 200. Mg(2+) is bound at residue glutamate 452. Serine 478 functions as the Proton acceptor in the catalytic mechanism.

It belongs to the IlvD/Edd family. In terms of assembly, homodimer. [2Fe-2S] cluster serves as cofactor. Requires Mg(2+) as cofactor.

The catalysed reaction is (2R)-2,3-dihydroxy-3-methylbutanoate = 3-methyl-2-oxobutanoate + H2O. It carries out the reaction (2R,3R)-2,3-dihydroxy-3-methylpentanoate = (S)-3-methyl-2-oxopentanoate + H2O. It functions in the pathway amino-acid biosynthesis; L-isoleucine biosynthesis; L-isoleucine from 2-oxobutanoate: step 3/4. Its pathway is amino-acid biosynthesis; L-valine biosynthesis; L-valine from pyruvate: step 3/4. Its function is as follows. Functions in the biosynthesis of branched-chain amino acids. Catalyzes the dehydration of (2R,3R)-2,3-dihydroxy-3-methylpentanoate (2,3-dihydroxy-3-methylvalerate) into 2-oxo-3-methylpentanoate (2-oxo-3-methylvalerate) and of (2R)-2,3-dihydroxy-3-methylbutanoate (2,3-dihydroxyisovalerate) into 2-oxo-3-methylbutanoate (2-oxoisovalerate), the penultimate precursor to L-isoleucine and L-valine, respectively. The chain is Dihydroxy-acid dehydratase from Polaromonas naphthalenivorans (strain CJ2).